The following is a 657-amino-acid chain: Acetyl-coenzyme A synthetase (657 aa).

Residues 192–195 (RRGK) and threonine 311 each bind CoA. ATP contacts are provided by residues 387 to 389 (GEP), 411 to 416 (DTWWQT), aspartate 504, arginine 519, and arginine 530. The Mg(2+) site is built by histidine 543 and valine 546. Arginine 592 contacts CoA. At lysine 617 the chain carries N6-acetyllysine.

The protein belongs to the ATP-dependent AMP-binding enzyme family. It depends on Mg(2+) as a cofactor. Acetylated. Deacetylation by the SIR2-homolog deacetylase activates the enzyme.

It carries out the reaction acetate + ATP + CoA = acetyl-CoA + AMP + diphosphate. Its function is as follows. Catalyzes the conversion of acetate into acetyl-CoA (AcCoA), an essential intermediate at the junction of anabolic and catabolic pathways. AcsA undergoes a two-step reaction. In the first half reaction, AcsA combines acetate with ATP to form acetyl-adenylate (AcAMP) intermediate. In the second half reaction, it can then transfer the acetyl group from AcAMP to the sulfhydryl group of CoA, forming the product AcCoA. This chain is Acetyl-coenzyme A synthetase, found in Campylobacter jejuni subsp. jejuni serotype O:6 (strain 81116 / NCTC 11828).